Consider the following 75-residue polypeptide: Molt-inhibiting hormone (75 aa).

Intrachain disulfides connect cysteine 7–cysteine 44, cysteine 24–cysteine 40, and cysteine 27–cysteine 53. Position 75 is an alanine amide (alanine 75).

This sequence belongs to the arthropod CHH/MIH/GIH/VIH hormone family.

The protein localises to the secreted. In terms of biological role, inhibits Y-organs where molting hormone (ecdysteroid) is secreted. A molting cycle is initiated when MIH secretion diminishes or stops. This chain is Molt-inhibiting hormone, found in Procambarus clarkii (Red swamp crayfish).